A 110-amino-acid chain; its full sequence is Coiled-coil-helix-coiled-coil-helix domain-containing protein 5 (110 aa).

Methionine 1 bears the N-acetylmethionine mark. CHCH domains are found at residues 9-52 (ARYC…PIIR) and 55-97 (RQAC…QPPS). 4 short sequence motifs (cx9C motif) span residues 12–22 (CSRELDQYGQC), 34–44 (CHHLKMSIARC), 58–68 (CAEPFEAFEKC), and 79–89 (CAEHMRRFLQC). Disulfide bonds link cysteine 12-cysteine 44, cysteine 22-cysteine 34, cysteine 58-cysteine 89, and cysteine 68-cysteine 79.

In terms of assembly, monomer.

It is found in the mitochondrion intermembrane space. This is Coiled-coil-helix-coiled-coil-helix domain-containing protein 5 (Chchd5) from Mus musculus (Mouse).